The chain runs to 314 residues: Vacuolar membrane protein FOSTERSO_4058 (314 aa).

The segment at Lys32–Gly59 is disordered. A helical membrane pass occupies residues Val93–Leu113. 3 positions are modified to phosphoserine: Ser148, Ser254, and Ser274. The segment at Glu240 to Asn309 is disordered. Residues Ser254–His269 show a composition bias toward basic and acidic residues.

It belongs to the PRM5 family.

Its subcellular location is the vacuole membrane. The chain is Vacuolar membrane protein FOSTERSO_4058 from Saccharomyces cerevisiae (strain FostersO) (Baker's yeast).